The chain runs to 628 residues: Biosynthetic arginine decarboxylase (628 aa).

The residue at position 99 (Lys99) is an N6-(pyridoxal phosphate)lysine. Val279–Tyr289 contacts substrate.

Belongs to the Orn/Lys/Arg decarboxylase class-II family. SpeA subfamily. Mg(2+) is required as a cofactor. The cofactor is pyridoxal 5'-phosphate.

It catalyses the reaction L-arginine + H(+) = agmatine + CO2. In terms of biological role, catalyzes the biosynthesis of agmatine from arginine. The polypeptide is Biosynthetic arginine decarboxylase (Xanthomonas axonopodis pv. citri (strain 306)).